A 120-amino-acid chain; its full sequence is NAD(P)H-quinone oxidoreductase subunit 3 (120 aa).

3 consecutive transmembrane segments (helical) span residues 6–26 (GYDA…LALV), 64–84 (MFAL…PWAV), and 89–109 (LGLL…VALA).

This sequence belongs to the complex I subunit 3 family. As to quaternary structure, NDH-1 can be composed of about 15 different subunits; different subcomplexes with different compositions have been identified which probably have different functions.

It is found in the cellular thylakoid membrane. The catalysed reaction is a plastoquinone + NADH + (n+1) H(+)(in) = a plastoquinol + NAD(+) + n H(+)(out). The enzyme catalyses a plastoquinone + NADPH + (n+1) H(+)(in) = a plastoquinol + NADP(+) + n H(+)(out). Functionally, NDH-1 shuttles electrons from an unknown electron donor, via FMN and iron-sulfur (Fe-S) centers, to quinones in the respiratory and/or the photosynthetic chain. The immediate electron acceptor for the enzyme in this species is believed to be plastoquinone. Couples the redox reaction to proton translocation, and thus conserves the redox energy in a proton gradient. Cyanobacterial NDH-1 also plays a role in inorganic carbon-concentration. This chain is NAD(P)H-quinone oxidoreductase subunit 3, found in Prochlorococcus marinus (strain SARG / CCMP1375 / SS120).